Consider the following 67-residue polypeptide: Protein AaeX (67 aa).

The next 2 helical transmembrane spans lie at 3–23 and 43–63; these read LFPVFVVFGLSFPPIFFELIL and FVWHPALFNTALYCCLFYLIS.

The protein belongs to the AaeX family.

It is found in the cell membrane. The chain is Protein AaeX from Enterobacter sp. (strain 638).